Consider the following 229-residue polypeptide: Uracil-DNA glycosylase (229 aa).

The active-site Proton acceptor is Asp-64.

It belongs to the uracil-DNA glycosylase (UDG) superfamily. UNG family.

The protein localises to the cytoplasm. It carries out the reaction Hydrolyzes single-stranded DNA or mismatched double-stranded DNA and polynucleotides, releasing free uracil.. Functionally, excises uracil residues from the DNA which can arise as a result of misincorporation of dUMP residues by DNA polymerase or due to deamination of cytosine. The protein is Uracil-DNA glycosylase of Escherichia coli O7:K1 (strain IAI39 / ExPEC).